The primary structure comprises 389 residues: Na(+)/H(+) antiporter NhaA 1 (389 aa).

11 consecutive transmembrane segments (helical) span residues 12–32 (VLNE…ALLV), 62–82 (FLLW…GLEL), 97–117 (IVLP…LFAL), 128–148 (GWAI…MMCG), 157–177 (IFLL…IAIF), 184–204 (IVAF…NLLG), 220–240 (ISVL…AFFI), 260–280 (FWIA…VNLS), 282–302 (IDIG…LFVG), 331–351 (LYGV…IDGL), and 365–385 (LAIL…LKFF).

The protein belongs to the NhaA Na(+)/H(+) (TC 2.A.33) antiporter family.

The protein resides in the cell inner membrane. The catalysed reaction is Na(+)(in) + 2 H(+)(out) = Na(+)(out) + 2 H(+)(in). Na(+)/H(+) antiporter that extrudes sodium in exchange for external protons. This Campylobacter jejuni (strain RM1221) protein is Na(+)/H(+) antiporter NhaA 1.